The primary structure comprises 71 residues: Small ribosomal subunit protein bS21 (71 aa).

Basic residues predominate over residues lysine 49–lysine 59. The disordered stretch occupies residues lysine 49 to tyrosine 71. Basic and acidic residues predominate over residues valine 60–tyrosine 71.

It belongs to the bacterial ribosomal protein bS21 family.

The chain is Small ribosomal subunit protein bS21 from Colwellia psychrerythraea (strain 34H / ATCC BAA-681) (Vibrio psychroerythus).